A 238-amino-acid polypeptide reads, in one-letter code: 7-cyano-7-deazaguanine synthase (238 aa).

Residue 12-22 (FSGGQDSGTCL) coordinates ATP. Residues Cys200, Cys215, Cys218, and Cys221 each coordinate Zn(2+).

This sequence belongs to the QueC family. Zn(2+) is required as a cofactor.

It catalyses the reaction 7-carboxy-7-deazaguanine + NH4(+) + ATP = 7-cyano-7-deazaguanine + ADP + phosphate + H2O + H(+). Its pathway is purine metabolism; 7-cyano-7-deazaguanine biosynthesis. Its function is as follows. Catalyzes the ATP-dependent conversion of 7-carboxy-7-deazaguanine (CDG) to 7-cyano-7-deazaguanine (preQ(0)). The chain is 7-cyano-7-deazaguanine synthase from Lawsonia intracellularis (strain PHE/MN1-00).